The following is a 637-amino-acid chain: Chaperone protein HtpG (637 aa).

Positions 1–345 (MSQQETHGFQ…SNDLPLNVSR (345 aa)) are a; substrate-binding. Residues 346–562 (EILQDNQVTT…EGEMSTQMIK (217 aa)) form a b region. Residues 563–637 (LMQAAGQPVP…TNQMLLASVK (75 aa)) form a c region.

The protein belongs to the heat shock protein 90 family. As to quaternary structure, homodimer.

It is found in the cytoplasm. Functionally, molecular chaperone. Has ATPase activity. This is Chaperone protein HtpG from Shewanella frigidimarina (strain NCIMB 400).